A 318-amino-acid chain; its full sequence is Glutathione synthetase (318 aa).

Residues 124 to 310 enclose the ATP-grasp domain; the sequence is EKLFTAWFPE…ITGKLMDAIE (187 aa). An ATP-binding site is contributed by 150 to 207; it reads FREQHGDVILKPLDGMGGASIFRVKEGDPNLSVIIETLTNHGQNYCMAQTFVPDISNG. Mg(2+) contacts are provided by glutamate 281 and asparagine 283.

It belongs to the prokaryotic GSH synthase family. Mg(2+) is required as a cofactor. Mn(2+) serves as cofactor.

It carries out the reaction gamma-L-glutamyl-L-cysteine + glycine + ATP = glutathione + ADP + phosphate + H(+). The protein operates within sulfur metabolism; glutathione biosynthesis; glutathione from L-cysteine and L-glutamate: step 2/2. This Vibrio cholerae serotype O1 (strain ATCC 39315 / El Tor Inaba N16961) protein is Glutathione synthetase.